Consider the following 526-residue polypeptide: Peptide chain release factor 3 (526 aa).

Residues 11-277 (SKRRTFAIIS…SLIKWAPSPL (267 aa)) enclose the tr-type G domain. Residues 20–27 (SHPDAGKT), 88–92 (DTPGH), and 142–145 (NKLD) each bind GTP.

Belongs to the TRAFAC class translation factor GTPase superfamily. Classic translation factor GTPase family. PrfC subfamily.

It is found in the cytoplasm. In terms of biological role, increases the formation of ribosomal termination complexes and stimulates activities of RF-1 and RF-2. It binds guanine nucleotides and has strong preference for UGA stop codons. It may interact directly with the ribosome. The stimulation of RF-1 and RF-2 is significantly reduced by GTP and GDP, but not by GMP. The sequence is that of Peptide chain release factor 3 from Buchnera aphidicola subsp. Acyrthosiphon pisum (strain 5A).